Consider the following 205-residue polypeptide: IDFMLQSSLHCKVPNGAIDITSLFINLNASTDAPHFIMEFIQGSPTSMVVLLDLLPRKDLALHPEYIEKYYEDTEVDKQRKIIEQLPQARPYLSPSLFVRSAFSPTAVFFTIDCGKGGEGTLEEIVHGHLASVVKGILQIWLDTCASDASEMEEGEREIMVKRDRTVRSKSIEVDLTANLPRMFGPDVSGRIIAEIRKAFGVQEG.

Substrate is bound by residues glutamate 39 and aspartate 175.

Homodimer. The N-terminus is blocked. As to expression, in etiolated and green primary leaves. Low amount in roots.

It is found in the plastid. It localises to the chloroplast stroma. It catalyses the reaction primary fluorescent chlorophyll catabolite + 2 oxidized [2Fe-2S]-[ferredoxin] = red chlorophyll catabolite + 2 reduced [2Fe-2S]-[ferredoxin] + 3 H(+). It functions in the pathway porphyrin-containing compound metabolism; chlorophyll degradation. In terms of biological role, catalyzes the key reaction of chlorophyll catabolism, porphyrin macrocycle cleavage of pheophorbide a (pheide a) to a primary fluorescent catabolite (pFCC). Works in a two-step reaction with pheophorbide a oxygenase (PaO) by reducing the C20/C1 double bond of the intermediate, RCC. This is Red chlorophyll catabolite reductase (rccR) from Hordeum vulgare (Barley).